Reading from the N-terminus, the 74-residue chain is DNA-directed RNA polymerase subunit omega (74 aa).

This sequence belongs to the RNA polymerase subunit omega family. As to quaternary structure, the RNAP catalytic core consists of 2 alpha, 1 beta/beta' and 1 omega subunit. When a sigma factor is associated with the core the holoenzyme is formed, which can initiate transcription.

It carries out the reaction RNA(n) + a ribonucleoside 5'-triphosphate = RNA(n+1) + diphosphate. In terms of biological role, promotes RNA polymerase assembly. Latches the N- and C-terminal regions of the beta' subunit thereby facilitating its interaction with the beta and alpha subunits. The protein is DNA-directed RNA polymerase subunit omega of Helicobacter hepaticus (strain ATCC 51449 / 3B1).